Consider the following 2121-residue polypeptide: Non-reducing polyketide synthase aoiG (2121 aa).

Residues 5 to 258 (YIFGDQTVRV…LPVSIYAPYH (254 aa)) enclose the Starter acyltransferase (SAT) domain. In terms of domain architecture, Ketosynthase family 3 (KS3) spans 386–817 (SSKIAIIGFS…GGNTAVLVED (432 aa)). Active-site for beta-ketoacyl synthase activity residues include cysteine 558, histidine 693, and histidine 735. Residues 921–1239 (FLFTGQGAQQ…LSVLHLAGVR (319 aa)) enclose the Malonyl-CoA:ACP transacylase (MAT) domain. Residues 1302 to 1433 (QKILEEEMTA…CTIELQRPHQ (132 aa)) form an N-terminal hotdog fold region. The PKS/mFAS DH domain maps to 1302–1608 (QKILEEEMTA…FQKVARRVLE (307 aa)). The Proton acceptor; for dehydratase activity role is filled by histidine 1334. Positions 1461–1608 (THKMRRGVAY…FQKVARRVLE (148 aa)) are C-terminal hotdog fold. Residue aspartate 1519 is the Proton donor; for dehydratase activity of the active site. Residues 1646 to 1723 (PHVEDAWQQV…SLRIYLNMSS (78 aa)) form the Carrier 1 domain. Serine 1683 carries the O-(pantetheine 4'-phosphoryl)serine modification. The segment covering 1728-1752 (DSIETSSYPTPDESTTTTITSPSGS) has biased composition (low complexity). The disordered stretch occupies residues 1728 to 1760 (DSIETSSYPTPDESTTTTITSPSGSDRNVGRNS). Positions 1763 to 1840 (DGVGTTVGLV…AITAALHAIF (78 aa)) constitute a Carrier 2 domain. Serine 1800 bears the O-(pantetheine 4'-phosphoryl)serine mark. The interval 1872 to 1976 (TLFLFPDGSG…ILIDSPNPMG (105 aa)) is TE/CLC (thioesterase/Claisen cyclase) domain.

The cofactor is pantetheine 4'-phosphate.

In terms of biological role, non-reducing polyketide synthase; part of the gene cluster that mediates the biosynthesis of a methylated derivative of known natural products orthosporin and diaporthin. AoiG catalyzes the biosynthesis of the hexaketide isocoumarin scaffold, via condensation of one acetyl-CoA starter unit with 6 malonyl-CoA units. An oxidoreductase that has still to be identified catalyzes the stereospecific reduction of the carbonyl moiety of the hexaketide isocoumarin scaffold to generate the S-configured secondary alcohol at C-11 of orthosporin. The methyltrasferase aoiF then catalyzes the biotransformation of not only orthosporin to diaporthin but also diaporthin to the final product, by performing a tandem methylation of the polyketide core. This Aspergillus oryzae (strain ATCC 42149 / RIB 40) (Yellow koji mold) protein is Non-reducing polyketide synthase aoiG.